We begin with the raw amino-acid sequence, 390 residues long: GTPase Obg (390 aa).

The Obg domain occupies 1–159 (MKFVDEAVIR…RHLRLELLLL (159 aa)). Positions 22–42 (SFRTEKYVPRGGPDGGDGGDG) are disordered. Gly residues predominate over residues 33–42 (GPDGGDGGDG). One can recognise an OBG-type G domain in the interval 160–333 (ADVGMLGLPN…LTYNLMTTIE (174 aa)). Residues 166 to 173 (GLPNAGKS), 191 to 195 (FTTLI), 213 to 216 (DIPG), 283 to 286 (NKVD), and 314 to 316 (SAL) contribute to the GTP site. Mg(2+) contacts are provided by S173 and T193.

Belongs to the TRAFAC class OBG-HflX-like GTPase superfamily. OBG GTPase family. Monomer. Mg(2+) is required as a cofactor.

The protein localises to the cytoplasm. An essential GTPase which binds GTP, GDP and possibly (p)ppGpp with moderate affinity, with high nucleotide exchange rates and a fairly low GTP hydrolysis rate. Plays a role in control of the cell cycle, stress response, ribosome biogenesis and in those bacteria that undergo differentiation, in morphogenesis control. The chain is GTPase Obg from Photobacterium profundum (strain SS9).